A 461-amino-acid chain; its full sequence is Cysteine--tRNA ligase (461 aa).

Cysteine 29 provides a ligand contact to Zn(2+). The 'HIGH' region motif lies at methionine 31 to histidine 41. Cysteine 210, histidine 235, and glutamate 239 together coordinate Zn(2+). Residues lysine 267 to serine 271 carry the 'KMSKS' region motif. Residue lysine 270 coordinates ATP.

It belongs to the class-I aminoacyl-tRNA synthetase family. In terms of assembly, monomer. Zn(2+) is required as a cofactor.

Its subcellular location is the cytoplasm. The catalysed reaction is tRNA(Cys) + L-cysteine + ATP = L-cysteinyl-tRNA(Cys) + AMP + diphosphate. This Stutzerimonas stutzeri (strain A1501) (Pseudomonas stutzeri) protein is Cysteine--tRNA ligase.